Reading from the N-terminus, the 285-residue chain is 2,3,4,5-tetrahydropyridine-2,6-dicarboxylate N-succinyltransferase (285 aa).

Positions 111 and 148 each coordinate substrate.

It belongs to the transferase hexapeptide repeat family. Homotrimer.

Its subcellular location is the cytoplasm. The catalysed reaction is (S)-2,3,4,5-tetrahydrodipicolinate + succinyl-CoA + H2O = (S)-2-succinylamino-6-oxoheptanedioate + CoA. It participates in amino-acid biosynthesis; L-lysine biosynthesis via DAP pathway; LL-2,6-diaminopimelate from (S)-tetrahydrodipicolinate (succinylase route): step 1/3. The sequence is that of 2,3,4,5-tetrahydropyridine-2,6-dicarboxylate N-succinyltransferase from Allorhizobium ampelinum (strain ATCC BAA-846 / DSM 112012 / S4) (Agrobacterium vitis (strain S4)).